The primary structure comprises 277 residues: Hydroxypyruvate/pyruvate aldolase (277 aa).

His54 acts as the Proton acceptor in catalysis. Positions 158 and 184 each coordinate a divalent metal cation.

This sequence belongs to the HpcH/HpaI aldolase family. Requires a divalent metal cation as cofactor.

It catalyses the reaction D-glyceraldehyde + 3-hydroxypyruvate = (3R,4S,5R)-3,4,5,6-tetrahydroxy-2-oxohexanoate. The catalysed reaction is D-glyceraldehyde + 3-hydroxypyruvate = 2-dehydro-D-gluconate. The enzyme catalyses D-glyceraldehyde + 3-hydroxypyruvate = 2-dehydro-D-galactonate. It carries out the reaction D-glyceraldehyde + pyruvate = 2-dehydro-3-deoxy-L-galactonate. Its function is as follows. Aldolase which can catalyze in vitro the aldolisation reaction between hydroxypyruvate (HPA) or pyruvate (PA) and D-glyceraldehyde (D-GA). The condensation of hydroxypyruvate and D-glyceraldehyde produces (3R,4S,5R)-3,4,5,6-tetrahydroxy-2-oxohexanoate as the major product, 2-dehydro-D-gluconate and 2-dehydro-D-galactonate. The condensation of pyruvate and D-glyceraldehyde produces 2-dehydro-3-deoxy-L-galactonate as the major product. The polypeptide is Hydroxypyruvate/pyruvate aldolase (Deinococcus radiodurans (strain ATCC 13939 / DSM 20539 / JCM 16871 / CCUG 27074 / LMG 4051 / NBRC 15346 / NCIMB 9279 / VKM B-1422 / R1)).